A 363-amino-acid chain; its full sequence is tRNA dimethylallyltransferase (363 aa).

65–72 contacts ATP; it reads GPTASGKS. 67-72 contributes to the substrate binding site; the sequence is TASGKS. 2 interaction with substrate tRNA regions span residues 90–93 and 214–218; these read DSMQ and QRLIR.

This sequence belongs to the IPP transferase family. Monomer. It depends on Mg(2+) as a cofactor.

It carries out the reaction adenosine(37) in tRNA + dimethylallyl diphosphate = N(6)-dimethylallyladenosine(37) in tRNA + diphosphate. In terms of biological role, catalyzes the transfer of a dimethylallyl group onto the adenine at position 37 in tRNAs that read codons beginning with uridine, leading to the formation of N6-(dimethylallyl)adenosine (i(6)A). In Rickettsia rickettsii (strain Sheila Smith), this protein is tRNA dimethylallyltransferase.